The chain runs to 330 residues: Ketol-acid reductoisomerase (NADP(+)) (330 aa).

The 181-residue stretch at 1–181 (MKVFYDSDFK…GLSRAGVIQT (181 aa)) folds into the KARI N-terminal Rossmann domain. Residues 24-27 (YGSQ), Arg-47, Ser-52, and 82-85 (DELQ) contribute to the NADP(+) site. The active site involves His-107. Gly-133 serves as a coordination point for NADP(+). A KARI C-terminal knotted domain is found at 182–327 (TFKEETETDL…AKLRKMCGLE (146 aa)). Mg(2+)-binding residues include Asp-190, Glu-194, Glu-226, and Glu-230. Substrate is bound at residue Ser-251.

The protein belongs to the ketol-acid reductoisomerase family. The cofactor is Mg(2+).

It carries out the reaction (2R)-2,3-dihydroxy-3-methylbutanoate + NADP(+) = (2S)-2-acetolactate + NADPH + H(+). It catalyses the reaction (2R,3R)-2,3-dihydroxy-3-methylpentanoate + NADP(+) = (S)-2-ethyl-2-hydroxy-3-oxobutanoate + NADPH + H(+). It participates in amino-acid biosynthesis; L-isoleucine biosynthesis; L-isoleucine from 2-oxobutanoate: step 2/4. It functions in the pathway amino-acid biosynthesis; L-valine biosynthesis; L-valine from pyruvate: step 2/4. Involved in the biosynthesis of branched-chain amino acids (BCAA). Catalyzes an alkyl-migration followed by a ketol-acid reduction of (S)-2-acetolactate (S2AL) to yield (R)-2,3-dihydroxy-isovalerate. In the isomerase reaction, S2AL is rearranged via a Mg-dependent methyl migration to produce 3-hydroxy-3-methyl-2-ketobutyrate (HMKB). In the reductase reaction, this 2-ketoacid undergoes a metal-dependent reduction by NADPH to yield (R)-2,3-dihydroxy-isovalerate. This chain is Ketol-acid reductoisomerase (NADP(+)), found in Methanococcus maripaludis (strain C5 / ATCC BAA-1333).